The sequence spans 436 residues: Carboxypeptidase A5 (436 aa).

An N-terminal signal peptide occupies residues 1–33 (MQGTPGGGTRPGPSPVDRRTLLVFSFILAAALG). Residues 34 to 126 (QMNFTGDQVL…ERQAMAKSRR (93 aa)) constitute a propeptide, activation peptide. Residues 138-431 (SYHTLEEIYS…MALRTIMEHT (294 aa)) form the Peptidase M14 domain. Residues His196 and Glu199 each contribute to the Zn(2+) site. Substrate contacts are provided by residues 196-199 (HSRE), Arg254, and 271-272 (NR). Cys265 and Cys288 form a disulfide bridge. His323 serves as a coordination point for Zn(2+). Substrate-binding positions include 324–325 (SY) and Tyr375. Glu397 serves as the catalytic Proton donor/acceptor.

It belongs to the peptidase M14 family. It depends on Zn(2+) as a cofactor. In terms of tissue distribution, expression is very low or not detectable.

Its subcellular location is the secreted. The chain is Carboxypeptidase A5 (CPA5) from Homo sapiens (Human).